The primary structure comprises 311 residues: Deoxyhypusine hydroxylase (311 aa).

5 HEAT-like PBS-type repeats span residues 69–95, 102–128, 196–222, 228–254, and 261–287; these read LKHEVAYVLGQTKNLHAAQYLRSVLEN, VRHEAAEALGALGDKDSLALLEDYFKN, ERYRAMFRLRDMGTDEACLALASGLDD, FKHEIAYVFGQLCNPVTVPALIKTLKD, and VRHEAAEALGSIATDECLPVLQSFLND. H71, E72, H104, and E105 together coordinate Fe cation. 4 residues coordinate Fe cation: H230, E231, H263, and E264.

The protein belongs to the deoxyhypusine hydroxylase family. Requires Fe(2+) as cofactor.

The protein localises to the cytoplasm. It localises to the nucleus. The catalysed reaction is [eIF5A protein]-deoxyhypusine + AH2 + O2 = [eIF5A protein]-hypusine + A + H2O. It functions in the pathway protein modification; eIF5A hypusination. Catalyzes the hydroxylation of the N(6)-(4-aminobutyl)-L-lysine intermediate to form hypusine, an essential post-translational modification only found in mature eIF-5A factor. The polypeptide is Deoxyhypusine hydroxylase (Debaryomyces hansenii (strain ATCC 36239 / CBS 767 / BCRC 21394 / JCM 1990 / NBRC 0083 / IGC 2968) (Yeast)).